The following is a 332-amino-acid chain: tRNA N6-adenosine threonylcarbamoyltransferase (332 aa).

Residues His-108 and His-112 each coordinate Fe cation. Residues 129–133 (LISGG), Asp-161, Glu-178, and Ser-258 each bind substrate. Asp-286 is a binding site for Fe cation.

It belongs to the KAE1 / TsaD family. Fe(2+) serves as cofactor.

The protein localises to the cytoplasm. The catalysed reaction is L-threonylcarbamoyladenylate + adenosine(37) in tRNA = N(6)-L-threonylcarbamoyladenosine(37) in tRNA + AMP + H(+). Its function is as follows. Required for the formation of a threonylcarbamoyl group on adenosine at position 37 (t(6)A37) in tRNAs that read codons beginning with adenine. Is probably involved in the transfer of the threonylcarbamoyl moiety of threonylcarbamoyl-AMP (TC-AMP) to the N6 group of A37. The sequence is that of tRNA N6-adenosine threonylcarbamoyltransferase from Pyrobaculum arsenaticum (strain DSM 13514 / JCM 11321 / PZ6).